Consider the following 243-residue polypeptide: Carboxy-S-adenosyl-L-methionine synthase (243 aa).

Residues Tyr-39, 64–66 (GCS), 89–90 (DN), 117–118 (DL), Asn-132, and Arg-199 each bind S-adenosyl-L-methionine.

Belongs to the class I-like SAM-binding methyltransferase superfamily. Cx-SAM synthase family. Homodimer.

It carries out the reaction prephenate + S-adenosyl-L-methionine = carboxy-S-adenosyl-L-methionine + 3-phenylpyruvate + H2O. Catalyzes the conversion of S-adenosyl-L-methionine (SAM) to carboxy-S-adenosyl-L-methionine (Cx-SAM). In Pseudoalteromonas atlantica (strain T6c / ATCC BAA-1087), this protein is Carboxy-S-adenosyl-L-methionine synthase.